A 353-amino-acid chain; its full sequence is DNA polymerase IV (353 aa).

The region spanning 4 to 185 (IIHVDMDCFF…LPLSKIPGVG (182 aa)) is the UmuC domain. Residues aspartate 8 and aspartate 103 each coordinate Mg(2+). Glutamate 104 is a catalytic residue.

The protein belongs to the DNA polymerase type-Y family. Monomer. Mg(2+) serves as cofactor.

The protein resides in the cytoplasm. The enzyme catalyses DNA(n) + a 2'-deoxyribonucleoside 5'-triphosphate = DNA(n+1) + diphosphate. Functionally, poorly processive, error-prone DNA polymerase involved in untargeted mutagenesis. Copies undamaged DNA at stalled replication forks, which arise in vivo from mismatched or misaligned primer ends. These misaligned primers can be extended by PolIV. Exhibits no 3'-5' exonuclease (proofreading) activity. May be involved in translesional synthesis, in conjunction with the beta clamp from PolIII. This is DNA polymerase IV from Serratia proteamaculans (strain 568).